A 2672-amino-acid polypeptide reads, in one-letter code: eIF-2-alpha kinase activator GCN1 (2672 aa).

HEAT repeat units lie at residues 5–42 (LNWE…QETL), 79–117 (NLEP…WINS), 174–211 (CIFQ…YSKL), 227–267 (QAAL…NPPS), 329–366 (FASS…KISN), 372–410 (EDLT…THYE), 509–549 (HGHA…NSSI), 611–648 (KYVT…IFNI), 706–745 (IQPN…EEGV), 902–932 (QDYL…IDSI), and 933–970 (SLTY…EEDE). The stretch at 975–994 (LLLAMEIISVHAEAFEDPSI) is one HEAT 12; degenerate repeat. The HEAT 13; degenerate repeat unit spans residues 995 to 1030 (PRISIVEVLLSLLSLPSKAKIAKDCFNALCQSISVA). 32 HEAT repeats span residues 1031-1067 (PNQE…LEPF), 1099-1138 (VVND…FTSE), 1185-1224 (STVA…REPI), 1243-1281 (QNSK…HLQQ), 1284-1321 (ARIH…QFKQ), 1363-1401 (LSEF…SLGK), 1405-1442 (PYVI…HTTG), 1444-1480 (GVKK…LDPT), 1484-1521 (ASLS…VIRN), 1523-1559 (EIQK…HYID), 1561-1598 (PSLA…LVDT), 1603-1640 (PYLQ…RLGE), 1641-1679 (EQFP…GLGL), 1681-1717 (KLDE…CFGS), 1721-1758 (PYIN…NYAT), 1760-1796 (AVDL…QVTG), 1825-1862 (DRRD…NTPR), 1863-1903 (AVKE…RVGG), 1905-1942 (ALSQ…SAST), 1947-1984 (QFQS…VVGK), 1985-2024 (TAVD…VIFP), 2026-2055 (LIPT…SALY), 2057-2095 (RLSI…SVND), 2097-2134 (EGLH…KTVL), 2138-2175 (VYIP…KVDK), 2206-2243 (RGPN…KTPA), 2250-2286 (VSVI…KIPM), 2290-2328 (PFIP…HQPR), 2347-2384 (GVKT…EEML), 2392-2429 (VAYA…ETGK), 2450-2487 (GLID…LEGE), and 2506-2546 (ENIN…FKFD). Positions 1330-1641 (LMEKLLNPTV…GALVERLGEE (312 aa)) are EF3-like region. Positions 2207-2356 (GPNCVLPIFL…GVKTAMLKAL (150 aa)) are RWDBD region.

The protein belongs to the GCN1 family. As to quaternary structure, interacts (via N- and C-terminus) with GCN2 (via N-terminal RWD domain); this interaction stimulates GCN2 kinase activity in a GCN20-dependent manner in response to amino acid starvation. Interacts (via C-terminus) with GCN20 (via N-terminus); this interaction stimulates GCN2 kinase activity in response to amino acid starvation. The GCN1-GCN20 complex interacts with GCN2 on translating ribosomes in amino acid-starved cells; GCN1 may bind near the ribosomal A-site and promotes the transfer of uncharged tRNAs from the A-site to the tRNA-binding domain in GCN2 for its subsequent kinase activation, and hence allowing GCN4 translational activation and derepression of amino acid biosynthetic genes. Interacts (via C-terminus) with YIH1 (via N-terminus); this interaction reduces the GCN1-GCN20 complex formation and prevents the interaction of GCN1 with GCN2 and GCN2 kinase activation in amino acid-starved cells. Interacts with GIR2; this interaction prevents the interaction of GCN1 with GCN2 and GCN2 kinase activation in amino acid-starved cells. Interacts (via middle region) with RPS10A and RPS10B; these interactions are direct and promote GCN2 kinase activation. Associates (via N-terminus) with ribosomes; this association is stimulated in a ATP- and GCN20-dependent manner and is necessary to activate GCN2 kinase activity.

The protein localises to the cytoplasm. Ribosome collision sensor that activates a translation quality control pathway when a ribosome has stalled during translation. Directly binds to the ribosome and acts as a sentinel for colliding ribosomes. GCN1 also acts as a positive activator of the integrated stress response (ISR) by mediating activation of GCN2 in response to low amino acid, carbon, or purine availability. Component of the GCN1-GCN20 complex that forms a complex with GCN2 on translating ribosomes: during this process, GCN1 acts as a chaperone to facilitate delivery of uncharged tRNAs that enter the A-site of ribosomes to the tRNA-binding domain of GCN2, and hence stimulating GCN2 kinase activity, leading to phosphorylation of eukaryotic translation initiation factor 2 (eIF-2-alpha/SUI2). eIF-2-alpha/SUI2 phosphorylation converts eIF-2-alpha/SUI2 into a global protein synthesis inhibitor, leading to a global attenuation of cap-dependent translation, and thus to a reduced overall utilization of amino acids, while concomitantly initiating the preferential translation of ISR-specific mRNAs, such as the transcriptional activator GCN4, and hence allowing GCN4-mediated reprogramming of amino acid biosynthetic gene expression to alleviate nutrient depletion. This is eIF-2-alpha kinase activator GCN1 from Saccharomyces cerevisiae (strain ATCC 204508 / S288c) (Baker's yeast).